A 618-amino-acid polypeptide reads, in one-letter code: Sulfite reductase [NADPH] flavoprotein alpha-component (618 aa).

A Flavodoxin-like domain is found at 64–202; that stretch reads VTLISASQTG…QAQQWRQQVV (139 aa). Residues 70–75, 117–120, and 153–162 contribute to the FMN site; these read SQTGNA, STQG, and LGDTSYEHFC. The FAD-binding FR-type domain occupies 253–467; the sequence is TAPLTAQLSV…IEHNDNFRLP (215 aa). Residues T341, K375, 405 to 408, 423 to 425, Y429, and 438 to 441 each bind FAD; these read RLYS, TVG, and GGAS. NADP(+) is bound by residues 538-539, 544-548, and D580; these read SR and KIYVQ. Position 618 (Y618) interacts with FAD.

This sequence belongs to the NADPH-dependent sulphite reductase flavoprotein subunit CysJ family. In the N-terminal section; belongs to the flavodoxin family. The protein in the C-terminal section; belongs to the flavoprotein pyridine nucleotide cytochrome reductase family. In terms of assembly, alpha(8)-beta(8). The alpha component is a flavoprotein, the beta component is a hemoprotein. FAD serves as cofactor. Requires FMN as cofactor.

The enzyme catalyses hydrogen sulfide + 3 NADP(+) + 3 H2O = sulfite + 3 NADPH + 4 H(+). It functions in the pathway sulfur metabolism; hydrogen sulfide biosynthesis; hydrogen sulfide from sulfite (NADPH route): step 1/1. Functionally, component of the sulfite reductase complex that catalyzes the 6-electron reduction of sulfite to sulfide. This is one of several activities required for the biosynthesis of L-cysteine from sulfate. The flavoprotein component catalyzes the electron flow from NADPH -&gt; FAD -&gt; FMN to the hemoprotein component. The protein is Sulfite reductase [NADPH] flavoprotein alpha-component of Yersinia pseudotuberculosis serotype I (strain IP32953).